Consider the following 286-residue polypeptide: Shikimate dehydrogenase (NADP(+)) (286 aa).

Shikimate contacts are provided by residues 20–22 (SLS) and Thr-67. Residue Lys-71 is the Proton acceptor of the active site. Positions 92 and 107 each coordinate shikimate. NADP(+)-binding positions include 132-136 (GAGGA) and Met-228. Residue Tyr-230 coordinates shikimate. Gly-251 lines the NADP(+) pocket.

It belongs to the shikimate dehydrogenase family. Homodimer.

It catalyses the reaction shikimate + NADP(+) = 3-dehydroshikimate + NADPH + H(+). It participates in metabolic intermediate biosynthesis; chorismate biosynthesis; chorismate from D-erythrose 4-phosphate and phosphoenolpyruvate: step 4/7. Functionally, involved in the biosynthesis of the chorismate, which leads to the biosynthesis of aromatic amino acids. Catalyzes the reversible NADPH linked reduction of 3-dehydroshikimate (DHSA) to yield shikimate (SA). In Geobacter sulfurreducens (strain ATCC 51573 / DSM 12127 / PCA), this protein is Shikimate dehydrogenase (NADP(+)).